A 444-amino-acid polypeptide reads, in one-letter code: Nuclear envelope integral membrane protein 1 (444 aa).

A signal peptide spans methionine 1–alanine 43. Asparagine 125 carries N-linked (GlcNAc...) asparagine glycosylation. The next 5 membrane-spanning stretches (helical) occupy residues proline 161–serine 181, phenylalanine 186–isoleucine 206, proline 216–phenylalanine 236, cysteine 245–cysteine 265, and leucine 289–alanine 309. Residues phenylalanine 186–glutamine 297 form an a; required for its colocalization with lamins at the nuclear envelope region. The tract at residues proline 336 to glutamate 405 is b; required for interaction with RAN-GTP. Residues proline 336–threonine 444 form a required for nuclear localization region. Phosphoserine is present on residues serine 368, serine 424, and serine 425.

Belongs to the NEMP family. In terms of assembly, homooligomer. Interacts with RAN-GTP. Interacts with EMD. In terms of processing, phosphorylation may regulate its interaction with RAN-GTP.

Its subcellular location is the nucleus inner membrane. The protein localises to the nucleus envelope. In terms of biological role, together with EMD, contributes to nuclear envelope stiffness in germ cells. Required for female fertility. Essential for normal erythropoiesis. Required for efficient nuclear envelope opening and enucleation during the late stages of erythroblast maturation. The polypeptide is Nuclear envelope integral membrane protein 1 (NEMP1) (Homo sapiens (Human)).